A 130-amino-acid chain; its full sequence is MAKLQQLVQAIQSGTIKTELPDVRVGDLVRIGVSIQEGNKQRIQPFEGTVISKHQAGANSTVTVRKSLQGIGVERVFPLYAPCVANLQVLRRAQVSRAKLYYLRSRTGKATRLKEKFETLPQIWMNQNQH.

This sequence belongs to the bacterial ribosomal protein bL19 family.

It is found in the plastid. The protein resides in the chloroplast. This Chlorella vulgaris (Green alga) protein is Large ribosomal subunit protein bL19c (rpl19).